Reading from the N-terminus, the 512-residue chain is MSTPVLELRGIVKTFGATRALDGASLRVAAGSVHGLVGENGAGKSTLIKVLAGIHRPDAGSLLLDGQPHGHFSPRQVERLGIGFIHQERLLPARFTVGEALFFGHERRFGPLLDRRSQQREAARLLDDYFGLRLPANALIGELSSAEQQMVQIVRALLIKPRVLVFDEPSVALVQREVERLLRIVQRLRDDGLAIVYISHYLQEIEALCDRVTVLRNGRDVAEVSPRNTSLEQITRLMVNREVGELYPKVAVPAGALLLDVRGLGRARAYQGIDLQVRRGEIVGLTGLVGSGAKELLRSLFGLAPPDSGEVRLDGQPLSLRSPREAVAQGVALMPEERRRQGVALDLSVQENTTLAALSRFVRLGLLSPARERHTTLELIERLRIKAHGAHAKVRQLSGGNQQKVALAKWFARCSSLYLLDEPSVGIDVGAKVEIYRLIGELVKEGAGVLILSSDLPELIGLCDRIHVMHRGAIAARFAAGEANSDRLLAVATGAQRAQNEERPFYAYAIAI.

ABC transporter domains follow at residues 6 to 242 (LELR…VNRE) and 252 to 496 (VPAG…TGAQ). 38–45 (GENGAGKS) serves as a coordination point for ATP.

The protein belongs to the ABC transporter superfamily. Ribose importer (TC 3.A.1.2.1) family. The complex is composed of an ATP-binding protein (RbsA), two transmembrane proteins (RbsC) and a solute-binding protein (RbsB).

It is found in the cell inner membrane. It carries out the reaction D-ribose(out) + ATP + H2O = D-ribose(in) + ADP + phosphate + H(+). Its function is as follows. Part of the ABC transporter complex RbsABC involved in ribose import. Responsible for energy coupling to the transport system. In Pseudomonas putida (strain ATCC 47054 / DSM 6125 / CFBP 8728 / NCIMB 11950 / KT2440), this protein is Ribose import ATP-binding protein RbsA.